Consider the following 214-residue polypeptide: Adenylate kinase (214 aa).

14–19 (GSGKGT) is a binding site for ATP. Residues 32 to 61 (SVGKVLRTVMESNTAEADVVKKFIKSGKLV) are NMP. Residues R38, 59-61 (KLV), 87-90 (GYPR), and Q94 each bind AMP. The segment at 124-162 (GRISCTDCGTIYNKLYCMPKINGVCDICNSSSFQNRVDD) is LID. Position 125 (R125) interacts with ATP. Positions 128 and 131 each coordinate Zn(2+). ATP is bound at residue 134 to 135 (IY). Positions 148 and 151 each coordinate Zn(2+). Residues R159 and R170 each coordinate AMP. ATP is bound at residue Q198.

It belongs to the adenylate kinase family. As to quaternary structure, monomer.

Its subcellular location is the cytoplasm. The enzyme catalyses AMP + ATP = 2 ADP. It participates in purine metabolism; AMP biosynthesis via salvage pathway; AMP from ADP: step 1/1. Catalyzes the reversible transfer of the terminal phosphate group between ATP and AMP. Plays an important role in cellular energy homeostasis and in adenine nucleotide metabolism. The protein is Adenylate kinase of Orientia tsutsugamushi (strain Ikeda) (Rickettsia tsutsugamushi).